The following is a 422-amino-acid chain: UDP-N-acetylglucosamine 1-carboxyvinyltransferase (422 aa).

23 to 24 (KN) contributes to the phosphoenolpyruvate binding site. A UDP-N-acetyl-alpha-D-glucosamine-binding site is contributed by R92. C116 serves as the catalytic Proton donor. At C116 the chain carries 2-(S-cysteinyl)pyruvic acid O-phosphothioketal. UDP-N-acetyl-alpha-D-glucosamine is bound by residues 121–125 (RPVDL), 161–165 (KVSVG), D306, and I328.

This sequence belongs to the EPSP synthase family. MurA subfamily.

The protein resides in the cytoplasm. The enzyme catalyses phosphoenolpyruvate + UDP-N-acetyl-alpha-D-glucosamine = UDP-N-acetyl-3-O-(1-carboxyvinyl)-alpha-D-glucosamine + phosphate. Its pathway is cell wall biogenesis; peptidoglycan biosynthesis. Functionally, cell wall formation. Adds enolpyruvyl to UDP-N-acetylglucosamine. This is UDP-N-acetylglucosamine 1-carboxyvinyltransferase from Aliivibrio fischeri (strain MJ11) (Vibrio fischeri).